A 1392-amino-acid chain; its full sequence is ENHANCER OF AG-4 protein 2 (1392 aa).

The PWWP domain maps to 20–77; it reads LGDLVLAKVKGFPAWPAKISRPEDWDRAPDPKKYFVQFFGTEEIAFVAPPDIQAFTSE. Residues 184–194 are compositionally biased toward polar residues; that stretch reads ESKVKTTSPVS. 4 disordered regions span residues 184 to 354, 384 to 428, 575 to 613, and 723 to 766; these read ESKV…STGT, KRQR…PAAQ, KKPQ…GERL, and QGHH…GGSL. Basic and acidic residues-rich tracts occupy residues 196-215, 239-258, and 311-345; these read SLEH…DKGT, KEAG…DKSN, and LESE…KCEI. The span at 391–400 shows a compositional bias: polar residues; sequence EHATSPSFSG. Positions 401–417 are enriched in basic and acidic residues; that stretch reads SRDKSGKGHLEQKDRSS. Polar residues-rich tracts occupy residues 591-601 and 725-744; these read KISSSQSQPAN and HHQQ…SRNQ. The region spanning 771–912 is the CID domain; sequence EAAISRDAFE…RYIDDIRASG (142 aa). Disordered stretches follow at residues 957–986, 1014–1356, and 1369–1392; these read FFSS…AGER, LEME…NYQP, and PGHT…WRPA. Positions 1059 to 1129 are enriched in pro residues; the sequence is EDSPPLPQES…SPPPPPPPPS (71 aa). Over residues 1157–1175 the composition is skewed to polar residues; that stretch reads LSHQTYPGSMQQDRSSIFT. A compositionally biased stretch (low complexity) spans 1215–1225; it reads SSREPSSFTSS. 2 stretches are compositionally biased toward polar residues: residues 1240–1255 and 1265–1284; these read EASS…TPLS and APSS…QHSY. Over residues 1293-1306 the composition is skewed to basic and acidic residues; sequence QRDDARRYRNEEPW. Polar residues predominate over residues 1311-1320; sequence SGHSAENQNG.

In terms of tissue distribution, expressed in the inflorescence meristem, floral primordia, inflorescence stem, and floral pedicels. Also detected in the shoot apical meristem, stems, leaves, embryos, and roots.

It localises to the nucleus. Its function is as follows. Transcription factor that functions as a repressor of flowering by enhancing the expression of several genes that delay flowering including FLC, FLM/MAF1, MAF2 and SVP. Also acts in the floral homeotic AGAMOUS (AG) pathway, specifically by processing the AGAMOUS pre-mRNA. Functions in association with HUA1 and HEN4 in AG pre-mRNA processing. Involved in all three aspects of the AG functions, the specification of stamen and carpel identities, the control of floral determinacy, and the spatial restriction of AP1 expression. Acts as a transcription regulator that controls anthocyanin accumulation. This is ENHANCER OF AG-4 protein 2 from Arabidopsis thaliana (Mouse-ear cress).